The sequence spans 104 residues: Large ribosomal subunit protein bL21 (104 aa).

The protein belongs to the bacterial ribosomal protein bL21 family. As to quaternary structure, part of the 50S ribosomal subunit. Contacts protein L20.

This protein binds to 23S rRNA in the presence of protein L20. The protein is Large ribosomal subunit protein bL21 of Streptococcus sanguinis (strain SK36).